A 386-amino-acid chain; its full sequence is 1-deoxy-D-xylulose 5-phosphate reductoisomerase (386 aa).

Thr13, Gly14, Ser15, Ile16, Asn40, and Asn122 together coordinate NADPH. 1-deoxy-D-xylulose 5-phosphate is bound at residue Lys123. An NADPH-binding site is contributed by Glu124. Asp148 contributes to the Mn(2+) binding site. 1-deoxy-D-xylulose 5-phosphate-binding residues include Ser149, Glu150, Ser177, and His201. Glu150 is a binding site for Mn(2+). NADPH is bound at residue Gly207. Ser214, Asn219, Lys220, and Glu223 together coordinate 1-deoxy-D-xylulose 5-phosphate. Glu223 contacts Mn(2+).

Belongs to the DXR family. Mg(2+) is required as a cofactor. The cofactor is Mn(2+).

The enzyme catalyses 2-C-methyl-D-erythritol 4-phosphate + NADP(+) = 1-deoxy-D-xylulose 5-phosphate + NADPH + H(+). It functions in the pathway isoprenoid biosynthesis; isopentenyl diphosphate biosynthesis via DXP pathway; isopentenyl diphosphate from 1-deoxy-D-xylulose 5-phosphate: step 1/6. Its function is as follows. Catalyzes the NADPH-dependent rearrangement and reduction of 1-deoxy-D-xylulose-5-phosphate (DXP) to 2-C-methyl-D-erythritol 4-phosphate (MEP). The sequence is that of 1-deoxy-D-xylulose 5-phosphate reductoisomerase from Francisella tularensis subsp. holarctica (strain OSU18).